The sequence spans 277 residues: Sulfur carrier protein FdhD (277 aa).

C121 functions as the Cysteine persulfide intermediate in the catalytic mechanism. Position 260-265 (260-265 (FCKPGR)) interacts with Mo-bis(molybdopterin guanine dinucleotide).

Belongs to the FdhD family.

The protein resides in the cytoplasm. Functionally, required for formate dehydrogenase (FDH) activity. Acts as a sulfur carrier protein that transfers sulfur from IscS to the molybdenum cofactor prior to its insertion into FDH. The chain is Sulfur carrier protein FdhD from Escherichia coli O8 (strain IAI1).